A 327-amino-acid chain; its full sequence is Movement protein (327 aa).

Positions 297–327 (IASSSSTENELARVSQNIDLLKNKLKEICGE) form a coiled coil.

The protein belongs to the caulimoviridae movement protein family. As to quaternary structure, homotrimer, through the coiled-coil domain. Interacts with VAP. May interact (via N-terminus) with host prenylated Rab acceptor protein 1D (PRA1D).

Its subcellular location is the host cell junction. The protein localises to the host plasmodesma. Its function is as follows. Transports viral genome to neighboring plant cells directly through plasmosdesmata, without any budding. The movement protein allows efficient cell to cell propagation, by bypassing the host cell wall barrier. Acts by forming tubules structures that increase the size exclusion limit (SEL) of plasmodesmata, thereby allowing viral ribonucleocapsids to spread directly to neighboring cells. The protein is Movement protein of Cauliflower mosaic virus (strain D/H) (CaMV).